Reading from the N-terminus, the 78-residue chain is Sec-independent protein translocase protein TatA (78 aa).

Residues 1 to 21 (MGMPSMPELLIILLIVVLLFG) traverse the membrane as a helical segment. Positions 46-78 (DEEEVATENKKEIEEKTTASTTKTTADQDTTKA) are disordered. A compositionally biased stretch (basic and acidic residues) spans 52–62 (TENKKEIEEKT). Residues 63-78 (TASTTKTTADQDTTKA) show a composition bias toward low complexity.

Belongs to the TatA/E family. The Tat system comprises two distinct complexes: a TatABC complex, containing multiple copies of TatA, TatB and TatC subunits, and a separate TatA complex, containing only TatA subunits. Substrates initially bind to the TatABC complex, which probably triggers association of the separate TatA complex to form the active translocon.

The protein resides in the cell inner membrane. In terms of biological role, part of the twin-arginine translocation (Tat) system that transports large folded proteins containing a characteristic twin-arginine motif in their signal peptide across membranes. TatA could form the protein-conducting channel of the Tat system. This chain is Sec-independent protein translocase protein TatA, found in Nitratiruptor sp. (strain SB155-2).